Here is a 237-residue protein sequence, read N- to C-terminus: Insulin-like growth factor-binding protein 4 (237 aa).

Residues 2-82 enclose the IGFBP N-terminal domain; sequence EAIHCPPCSE…VHGQGVCMEL (81 aa). 6 disulfide bridges follow: Cys-6-Cys-32, Cys-9-Cys-34, Cys-17-Cys-35, Cys-23-Cys-38, Cys-46-Cys-59, and Cys-53-Cys-79. Residue Asn-104 is glycosylated (N-linked (GlcNAc...) asparagine). Cystine bridges form between Cys-110-Cys-117, Cys-153-Cys-183, Cys-194-Cys-205, and Cys-207-Cys-228. One can recognise a Thyroglobulin type-1 domain in the interval 150–228; the sequence is QGSCQSELHR…GLEPKGELDC (79 aa). A Phosphoserine modification is found at Ser-234.

As to quaternary structure, binds IGF2 more than IGF1. In terms of processing, there are two different molecular mass variants (29 kDa and 24 kDa forms). The 29 kDa form was shown to be N-glycosylated. Detected in adult ewe, liver &gt; kidney &gt; lung &gt;&gt; heart and also in several fetal tissues.

The protein resides in the secreted. In terms of biological role, IGF-binding proteins prolong the half-life of the IGFs and have been shown to either inhibit or stimulate the growth promoting effects of the IGFs on cell culture. They alter the interaction of IGFs with their cell surface receptors. This Ovis aries (Sheep) protein is Insulin-like growth factor-binding protein 4 (IGFBP4).